The sequence spans 906 residues: Protein translocase subunit SecA (906 aa).

ATP-binding positions include glutamine 87, 105-109 (GEGKT), and aspartate 507. Zn(2+)-binding residues include cysteine 890, cysteine 892, cysteine 901, and histidine 902.

It belongs to the SecA family. Monomer and homodimer. Part of the essential Sec protein translocation apparatus which comprises SecA, SecYEG and auxiliary proteins SecDF-YajC and YidC. It depends on Zn(2+) as a cofactor.

The protein resides in the cell inner membrane. The protein localises to the cytoplasm. It catalyses the reaction ATP + H2O + cellular proteinSide 1 = ADP + phosphate + cellular proteinSide 2.. Functionally, part of the Sec protein translocase complex. Interacts with the SecYEG preprotein conducting channel. Has a central role in coupling the hydrolysis of ATP to the transfer of proteins into and across the cell membrane, serving both as a receptor for the preprotein-SecB complex and as an ATP-driven molecular motor driving the stepwise translocation of polypeptide chains across the membrane. The chain is Protein translocase subunit SecA from Laribacter hongkongensis (strain HLHK9).